A 647-amino-acid chain; its full sequence is Type II methyltransferase M.FokI (647 aa).

2 consecutive short sequence motifs (adenine-specific methylase) follow at residues 218–221 and 548–551; these read DPPY.

The protein belongs to the N(4)/N(6)-methyltransferase family. As to quaternary structure, monomer.

The enzyme catalyses a 2'-deoxyadenosine in DNA + S-adenosyl-L-methionine = an N(6)-methyl-2'-deoxyadenosine in DNA + S-adenosyl-L-homocysteine + H(+). Its function is as follows. An alpha subtype methylase that recognizes the asymmetric double-stranded sequence 5'-GGATG-3', methylates A-3 of both strands, and protects the DNA from cleavage by the FokI endonuclease. The polypeptide is Type II methyltransferase M.FokI (Planomicrobium okeanokoites (Planococcus okeanokoites)).